Here is a 303-residue protein sequence, read N- to C-terminus: Ribonuclease HIII (303 aa).

Residues 89–303 (WSVLGSDEVG…ANTKKAERLL (215 aa)) form the RNase H type-2 domain. A divalent metal cation contacts are provided by aspartate 95, glutamate 96, and aspartate 199.

This sequence belongs to the RNase HII family. RnhC subfamily. Requires Mn(2+) as cofactor. Mg(2+) is required as a cofactor.

The protein resides in the cytoplasm. The catalysed reaction is Endonucleolytic cleavage to 5'-phosphomonoester.. Endonuclease that specifically degrades the RNA of RNA-DNA hybrids. This Leuconostoc mesenteroides subsp. mesenteroides (strain ATCC 8293 / DSM 20343 / BCRC 11652 / CCM 1803 / JCM 6124 / NCDO 523 / NBRC 100496 / NCIMB 8023 / NCTC 12954 / NRRL B-1118 / 37Y) protein is Ribonuclease HIII.